A 350-amino-acid chain; its full sequence is FAD:protein FMN transferase (350 aa).

A signal peptide spans 1-19; it reads MKMTFCRAVCLAAAFLLMG. Cys20 is lipidated: N-palmitoyl cysteine. A lipid anchor (S-diacylglycerol cysteine) is attached at Cys20. FAD is bound by residues Met41, Tyr78, 119–121, and Asp181; that span reads AMD. Residue Thr184 coordinates Mg(2+). FAD contacts are provided by Glu187 and Ile272. Mg(2+) is bound by residues Asp298, Asp301, and Thr302.

It belongs to the ApbE family. In terms of assembly, homodimer. It depends on Mg(2+) as a cofactor.

The protein localises to the cell inner membrane. It catalyses the reaction L-threonyl-[protein] + FAD = FMN-L-threonyl-[protein] + AMP + H(+). Functionally, flavin transferase that catalyzes the transfer of the FMN moiety of FAD and its covalent binding to the hydroxyl group of a threonine residue in a target flavoprotein such as NqrB and NqrC, two subunits of the NQR complex. The chain is FAD:protein FMN transferase from Salmonella typhimurium (strain LT2 / SGSC1412 / ATCC 700720).